A 96-amino-acid chain; its full sequence is ESAT-6-like protein SAG0230 (96 aa).

It belongs to the WXG100 family. sagEsxA-like subfamily. As to quaternary structure, homodimer.

In Streptococcus agalactiae serotype V (strain ATCC BAA-611 / 2603 V/R), this protein is ESAT-6-like protein SAG0230.